The chain runs to 66 residues: Large ribosomal subunit protein bL35 (66 aa).

Residues 1 to 16 are compositionally biased toward basic residues; the sequence is MPKQKTHRASAKRFKR. The tract at residues 1–21 is disordered; it reads MPKQKTHRASAKRFKRTGSGG.

It belongs to the bacterial ribosomal protein bL35 family.

In Streptococcus mutans serotype c (strain ATCC 700610 / UA159), this protein is Large ribosomal subunit protein bL35.